Reading from the N-terminus, the 428-residue chain is MFGLEDVHSVVRAVEKHHEWLKKCLPMIASENVTSPAVREMLVTDFGHRYAEGKPGERLYEGCEYIDEVELACVRLAKELFGAEHANVQPTSGVVANLAALFALTEPGDTILGLRISHGGHISHHDISAPGVRGLNVEYLPFDEEDMAIDVDGMVRKIEEVEPSVVMLGASLFLFPHPVEEAVEAVEAVGGYVVYDAAHVLGLIAGGQFQDPIREGAHVVTGSTHKTFPGPQGGIVLCQRDLADDIDEAVFPGLVSNHHLHHVAALAVALAEFKEYGERYARDTVRNAKALAEALYAEGLRVLCEHRGFTESHQIAVDVREQGGGAVIAEKLESANILCNKNLLPWDDESKSHDPSGIRLGTQELTRLGMGLSEMEYIAELIADVVLGRREPSEVRKDVEELRREFQEVKYGFGSGVGAHEWPRLADW.

Position 120 to 122 (120 to 122 (GHI)) interacts with (6S)-5,6,7,8-tetrahydrofolate. K226 carries the N6-(pyridoxal phosphate)lysine modification.

The protein belongs to the SHMT family. Homodimer. Pyridoxal 5'-phosphate is required as a cofactor.

It is found in the cytoplasm. The catalysed reaction is 5,10-methylenetetrahydromethanopterin + glycine + H2O = 5,6,7,8-tetrahydromethanopterin + L-serine. Its pathway is amino-acid biosynthesis; glycine biosynthesis; glycine from L-serine: step 1/1. In terms of biological role, catalyzes the reversible interconversion of serine and glycine with tetrahydromethanopterin (H4MPT) serving as the one-carbon carrier. Also exhibits a pteridine-independent aldolase activity toward beta-hydroxyamino acids, producing glycine and aldehydes, via a retro-aldol mechanism. This Methanopyrus kandleri (strain AV19 / DSM 6324 / JCM 9639 / NBRC 100938) protein is Serine hydroxymethyltransferase.